The primary structure comprises 349 residues: Aspartate-semialdehyde dehydrogenase (349 aa).

Residues 12–15 and 39–40 each bind NADP(+); these read TGSV and NS. Arginine 113 contributes to the phosphate binding site. Residue cysteine 148 is the Acyl-thioester intermediate of the active site. Glutamine 175 lines the substrate pocket. Position 178–179 (178–179) interacts with NADP(+); sequence SG. Residue glutamate 201 participates in substrate binding. Lysine 204 provides a ligand contact to phosphate. Arginine 234 provides a ligand contact to substrate. The active-site Proton acceptor is histidine 241. 326–327 serves as a coordination point for NADP(+); the sequence is NT.

The protein belongs to the aspartate-semialdehyde dehydrogenase family. As to quaternary structure, homodimer.

The enzyme catalyses L-aspartate 4-semialdehyde + phosphate + NADP(+) = 4-phospho-L-aspartate + NADPH + H(+). The protein operates within amino-acid biosynthesis; L-lysine biosynthesis via DAP pathway; (S)-tetrahydrodipicolinate from L-aspartate: step 2/4. Its pathway is amino-acid biosynthesis; L-methionine biosynthesis via de novo pathway; L-homoserine from L-aspartate: step 2/3. It functions in the pathway amino-acid biosynthesis; L-threonine biosynthesis; L-threonine from L-aspartate: step 2/5. Functionally, catalyzes the NADPH-dependent formation of L-aspartate-semialdehyde (L-ASA) by the reductive dephosphorylation of L-aspartyl-4-phosphate. In Leptospira interrogans serogroup Icterohaemorrhagiae serovar copenhageni (strain Fiocruz L1-130), this protein is Aspartate-semialdehyde dehydrogenase.